A 752-amino-acid polypeptide reads, in one-letter code: Protein WEAK CHLOROPLAST MOVEMENT UNDER BLUE LIGHT-like 2 (752 aa).

At Ser-143 the chain carries Phosphoserine. Coiled coils occupy residues Glu-186–Ser-557 and Glu-596–Met-651. The segment at Lys-476 to Cys-495 is disordered. Over residues Lys-653–Asn-675 the composition is skewed to basic and acidic residues. Residues Lys-653–Arg-733 are disordered. Positions Lys-690–Pro-723 are enriched in polar residues.

It belongs to the WEB family.

The polypeptide is Protein WEAK CHLOROPLAST MOVEMENT UNDER BLUE LIGHT-like 2 (WEL2) (Arabidopsis thaliana (Mouse-ear cress)).